Here is a 317-residue protein sequence, read N- to C-terminus: UAP56-interacting factor (317 aa).

An N-acetylmethionine modification is found at Met-1. The segment at Met-1–Ser-23 is disordered. At Thr-14 the chain carries Phosphothreonine. Ser-23 carries the post-translational modification Phosphoserine. Residues Asn-26–Glu-44 carry the UAP56-binding motif motif. Phosphoserine occurs at positions 60 and 117. A Glycyl lysine isopeptide (Lys-Gly) (interchain with G-Cter in SUMO1) cross-link involves residue Lys-139. Lys-260 participates in a covalent cross-link: Glycyl lysine isopeptide (Lys-Gly) (interchain with G-Cter in SUMO2).

The protein belongs to the UIF family. Interacts with DDX39B/UAP56 and NXF1; interaction with DDX39B/UAP56 and NXF1 are mutually exclusive. Interacts with SSRP1; required for its recruitment to mRNAs. Interacts with CHTOP.

The protein resides in the nucleus. Its subcellular location is the nucleoplasm. It localises to the nucleus speckle. Functionally, required for mRNA export from the nucleus to the cytoplasm. Acts as an adapter that uses the DDX39B/UAP56-NFX1 pathway to ensure efficient mRNA export and delivering to the nuclear pore. Associates with spliced and unspliced mRNAs simultaneously with ALYREF/THOC4. This chain is UAP56-interacting factor (Fyttd1), found in Rattus norvegicus (Rat).